A 640-amino-acid polypeptide reads, in one-letter code: MVVAPSQVEQQNWTPAASAQLYGLDQWGDPYFSVNARGHVLVQPRGDRGGSLDLVELVEGLQSRDLQLPLLIRFEDILEDRLERLHGAFERAIAQYGYGGHYQGVFPVKCNQQRHVVEQLVESGRRWHFGLEAGSKAELLIALSLLDDPKALLICNGYKDQRYIETAILARQLGRQPVVVIEQADEVPRIIEASRNLGAAPLIGVRAKLSTRSTGRWGSSVGEKAKFGLSIPDLLATVEALRDADLLGDLRLLHFHVGSQICDIAVLKDALQEAGQLYVQLASLGAPMGFLDVGGGLGVDYDGSRSATAASTNYSLQNYANDVVATIRECCEPQGIVVPTLVSESGRAIASHFSVLVFNVLGQSGVNQPSIPEAVEGEALIVRNLRETLSGIGPDNLQEAWNDALKFKDDALAAFRLGYLSLTERGKAEQLYWACCSAIADLLPGEEELPDELKGLKAAFASTYYANLSVFRSAPDTWAIDQLFPVMPIHRLEEQPRELGSFADLTCDSDGKLARFIASGSAKPLLELHELKDGEPYWIGLFLGGAYQEVMGNLHNLFGSTNAVSIRLSPGGPYRVEHVVRGQTNSDVLEAMEHNPEALLERLRQASEEAIGSGDLSISAARRLMQHLEGSLRQTTYLEE.

At Lys-109 the chain carries N6-(pyridoxal phosphate)lysine. Residue 291–301 (LDVGGGLGVDY) coordinates substrate.

Belongs to the Orn/Lys/Arg decarboxylase class-II family. SpeA subfamily. The cofactor is Mg(2+). It depends on pyridoxal 5'-phosphate as a cofactor.

It catalyses the reaction L-arginine + H(+) = agmatine + CO2. Its pathway is amine and polyamine biosynthesis; agmatine biosynthesis; agmatine from L-arginine: step 1/1. Its function is as follows. Catalyzes the biosynthesis of agmatine from arginine. The protein is Biosynthetic arginine decarboxylase of Synechococcus sp. (strain RCC307).